A 384-amino-acid polypeptide reads, in one-letter code: Probable endopolygalacturonase C (384 aa).

An N-terminal signal peptide occupies residues 1-19 (MVRQLILISSLLAAVAVRA). Residues 20 to 40 (APADPAHPMVTEAPDVNLVEK) constitute a propeptide that is removed on maturation. A disulfide bond links C45 and C63. PbH1 repeat units follow at residues 176–207 (STDL…DIGE) and 208–229 (STYI…AINS). The active-site Proton donor is D222. Cysteines 224 and 240 form a disulfide. The active site involves H244. PbH1 repeat units lie at residues 254–280 (RDDN…RIKT) and 288–310 (VSEV…VIEQ). N-linked (GlcNAc...) asparagine glycosylation occurs at N261. 2 disulfide bridges follow: C349–C354 and C373–C382.

This sequence belongs to the glycosyl hydrolase 28 family.

It is found in the secreted. The catalysed reaction is (1,4-alpha-D-galacturonosyl)n+m + H2O = (1,4-alpha-D-galacturonosyl)n + (1,4-alpha-D-galacturonosyl)m.. In terms of biological role, involved in maceration and soft-rotting of plant tissue. Hydrolyzes the 1,4-alpha glycosidic bonds of de-esterified pectate in the smooth region of the plant cell wall. In Aspergillus niger (strain ATCC MYA-4892 / CBS 513.88 / FGSC A1513), this protein is Probable endopolygalacturonase C (pgaC).